We begin with the raw amino-acid sequence, 770 residues long: MPRLLTKRGCWITLAAAPFLLFLAAWGADKLWPLPLHEVNPARVVVAQDGTPLWRFADADGIWRYPVTIEDVSPRYLEALINYEDRWFWKHPGVNPFSVARAAWQDLTSGRVISGGSTLTMQVARLLDPHPKTFGGKIRQLWRALQLEWHLSKREILTLYLNRAPFGGTLQGIGAASWAYLGKSPANLSYSEAAMLAVLPQAPSRLRPDRWPERAEAARNKVLERMAVQGVWSREQVKESREEPIWLAPRQMPQLAPLFSRMMLGKSKSDKITTTLDAGLQRRLEELAQNWKGRLPPRSSLAMIVVDHTDMRVRGWVGSVDLNDDSRFGHVDMVNSIRSPGSVLKPFVYGLALDEGLIHPASLLQDVPRRTGDYRPGNFDSGFHGPISMSEALVRSLNLPAVQVLEAYGPKRFAAKLRNVGLPLYLPNGAAPNLSLILGGAGAKLEDMAAAYTAFARHGKAGKLRLQPDDPLLERPLMSSGAAWIIRRIMADEAQPLPDSALPRVAPLAWKTGTSYGYRDAWAIGVNARYVIGIWTGRPDGTPVVGQFGFASAVPLLNQVNNILLSRSANLPEDPRPNSVTRGVICWPGGQSLPEGDGNCRRRLATWLLDGSQPPTLLLPEQEGINGIRFPIWLDENGKRVAADCPQARQEMINVWPLPLEPWLPASERRAVRLPPASTSCPPYGHDAQLPLQLTGVRDGAIIKRLPGAAEATLPLQSSGGAGERWWFLNGEPLTERGRNVTLHLTDKGDYQLLVMDDVGQIATVKFVMQ.

Over 1–8 (MPRLLTKR) the chain is Cytoplasmic. A helical; Signal-anchor for type II membrane protein membrane pass occupies residues 9-29 (GCWITLAAAPFLLFLAAWGAD). Topologically, residues 30 to 770 (KLWPLPLHEV…QIATVKFVMQ (741 aa)) are periplasmic. Positions 43-213 (RVVVAQDGTP…SRLRPDRWPE (171 aa)) are transglycosylase. Glu84 functions as the Proton donor; for transglycosylase activity in the catalytic mechanism. The tract at residues 278–559 (AGLQRRLEEL…FASAVPLLNQ (282 aa)) is transpeptidase. Catalysis depends on Ser342, which acts as the Acyl-ester intermediate; for transpeptidase activity.

This sequence in the N-terminal section; belongs to the glycosyltransferase 51 family. In the C-terminal section; belongs to the transpeptidase family.

The protein localises to the cell inner membrane. It carries out the reaction [GlcNAc-(1-&gt;4)-Mur2Ac(oyl-L-Ala-gamma-D-Glu-L-Lys-D-Ala-D-Ala)](n)-di-trans,octa-cis-undecaprenyl diphosphate + beta-D-GlcNAc-(1-&gt;4)-Mur2Ac(oyl-L-Ala-gamma-D-Glu-L-Lys-D-Ala-D-Ala)-di-trans,octa-cis-undecaprenyl diphosphate = [GlcNAc-(1-&gt;4)-Mur2Ac(oyl-L-Ala-gamma-D-Glu-L-Lys-D-Ala-D-Ala)](n+1)-di-trans,octa-cis-undecaprenyl diphosphate + di-trans,octa-cis-undecaprenyl diphosphate + H(+). It participates in cell wall biogenesis; peptidoglycan biosynthesis. Transglycosylase activity can be inhibited by moenomycin. Functionally, cell wall formation. The enzyme has a penicillin-insensitive transglycosylase N-terminal domain (formation of linear glycan strands) and a transpeptidase C-terminal domain which may not be functional. This Escherichia coli (strain K12) protein is Penicillin-binding protein 1C (pbpC).